Here is a 284-residue protein sequence, read N- to C-terminus: Cell division protein DivIB (284 aa).

The tract at residues 1–21 (MFGKRKDSKNKAMRDNEELTP) is disordered. Over 1–63 (MFGKRKDSKN…GLRKRRLQKR (63 aa)) the chain is Cytoplasmic. The chain crosses the membrane as a helical span at residues 64–84 (VITLASIFGISAIISLYAILP). The Extracellular segment spans residues 85-284 (VSRVSNIEIE…VGAYAYPYBK (200 aa)). The POTRA domain maps to 86 to 156 (SRVSNIEIEG…NVVKFKVTEY (71 aa)).

This sequence belongs to the FtsQ/DivIB family. DivIB subfamily.

It is found in the cell membrane. In terms of biological role, cell division protein that may be involved in stabilizing or promoting the assembly of the division complex. The protein is Cell division protein DivIB of Ligilactobacillus salivarius (strain CECT 5713) (Lactobacillus salivarius).